The following is a 514-amino-acid chain: Alanine--glyoxylate aminotransferase 2, mitochondrial (514 aa).

A mitochondrion-targeting transit peptide spans 1–41 (MTLIWRHLLRPLCLVTPAPRILEMRPFLNLGASWTSVTKLS). Residue K71 is modified to N6-acetyllysine; alternate. At K71 the chain carries N6-succinyllysine; alternate. At K84 the chain carries N6-acetyllysine. K262 is modified (N6-acetyllysine; alternate). K262 is subject to N6-succinyllysine; alternate. K304 bears the N6-succinyllysine mark. K350 is modified (N6-(pyridoxal phosphate)lysine). K420 bears the N6-acetyllysine; alternate mark. K420 bears the N6-succinyllysine; alternate mark.

This sequence belongs to the class-III pyridoxal-phosphate-dependent aminotransferase family. Homotetramer. The cofactor is pyridoxal 5'-phosphate.

The protein resides in the mitochondrion. It carries out the reaction glyoxylate + L-alanine = glycine + pyruvate. The enzyme catalyses (R)-3-amino-2-methylpropanoate + pyruvate = 2-methyl-3-oxopropanoate + L-alanine. It catalyses the reaction 3-oxopropanoate + L-alanine = beta-alanine + pyruvate. The catalysed reaction is 2-oxobutanoate + L-alanine = (2S)-2-aminobutanoate + pyruvate. It carries out the reaction N(omega),N(omega)-dimethyl-L-arginine + pyruvate = 5-(3,3-dimethylguanidino)-2-oxopentanoate + L-alanine. The enzyme catalyses N(omega),N('omega)-dimethyl-L-arginine + pyruvate = 5-(3,3'-dimethylguanidino)-2-oxopentanoate + L-alanine. It catalyses the reaction N(omega),N(omega)-dimethyl-L-arginine + glyoxylate = 5-(3,3-dimethylguanidino)-2-oxopentanoate + glycine. The catalysed reaction is N(omega),N('omega)-dimethyl-L-arginine + glyoxylate = 5-(3,3'-dimethylguanidino)-2-oxopentanoate + glycine. It carries out the reaction N(omega)-methyl-L-arginine + pyruvate = 5-(3-methylguanidino)-2-oxopentanoate + L-alanine. The enzyme catalyses N(omega)-methyl-L-arginine + glyoxylate = 5-(3-methylguanidino)-2-oxopentanoate + glycine. It catalyses the reaction L-ornithine + pyruvate = 5-amino-2-oxopentanoate + L-alanine. The catalysed reaction is L-ornithine + glyoxylate = 5-amino-2-oxopentanoate + glycine. It carries out the reaction (2S)-2-aminobutanoate + glyoxylate = 2-oxobutanoate + glycine. The enzyme catalyses N(omega),N(omega)-dimethyl-L-arginine + oxaloacetate = 5-(3,3-dimethylguanidino)-2-oxopentanoate + L-aspartate. It catalyses the reaction oxaloacetate + L-alanine = L-aspartate + pyruvate. The catalysed reaction is N(omega),N(omega)-dimethyl-L-arginine + 2-oxobutanoate = 5-(3,3-dimethylguanidino)-2-oxopentanoate + (2S)-2-aminobutanoate. It carries out the reaction 2-oxopentanoate + N(omega),N(omega)-dimethyl-L-arginine = 5-(3,3-dimethylguanidino)-2-oxopentanoate + L-2-aminopentanoate. The enzyme catalyses 2-oxohexanoate + N(omega),N(omega)-dimethyl-L-arginine = L-2-aminohexanoate + 5-(3,3-dimethylguanidino)-2-oxopentanoate. Functionally, multifunctional aminotransferase with a broad substrate specificity. Catalyzes the conversion of glyoxylate to glycine using alanine as the amino donor. Catalyzes metabolism of not L- but the D-isomer of D-beta-aminoisobutyric acid to generate 2-methyl-3-oxopropanoate and alanine. Catalyzes the transfer of the amino group from beta-alanine to pyruvate to yield L-alanine and 3-oxopropanoate. Can metabolize NG-monomethyl-L-arginine (NMMA), asymmetric NG,NG-dimethyl-L-arginine (ADMA) and symmetric NG,N'G-dimethyl-L-arginine (SDMA). ADMA is a potent inhibitor of nitric-oxide (NO) synthase, and this activity provides mechanism through which the kidney regulates blood pressure. This Pongo abelii (Sumatran orangutan) protein is Alanine--glyoxylate aminotransferase 2, mitochondrial (AGXT2).